Reading from the N-terminus, the 142-residue chain is Metallothiol transferase FosB (142 aa).

One can recognise a VOC domain in the interval 5 to 120; the sequence is NVNHICFSVS…DGHKIELHTG (116 aa). The Mg(2+) site is built by H8, H67, and E116. E116 (proton donor/acceptor) is an active-site residue.

This sequence belongs to the fosfomycin resistance protein family. FosB subfamily. Homodimer. The cofactor is Mg(2+).

It is found in the cytoplasm. Its function is as follows. Metallothiol transferase which confers resistance to fosfomycin by catalyzing the addition of a thiol cofactor to fosfomycin. L-cysteine is probably the physiological thiol donor. This is Metallothiol transferase FosB from Staphylococcus epidermidis (strain ATCC 35984 / DSM 28319 / BCRC 17069 / CCUG 31568 / BM 3577 / RP62A).